Reading from the N-terminus, the 144-residue chain is Large ribosomal subunit protein uL15 (144 aa).

A disordered region spans residues 1–52 (MRLNSLSPAEGAKHSAKRLGRGISSGLGKTGGRGHKGQKSRTGGGVRRGFEG).

It belongs to the universal ribosomal protein uL15 family. As to quaternary structure, part of the 50S ribosomal subunit.

Functionally, binds to the 23S rRNA. This chain is Large ribosomal subunit protein uL15, found in Actinobacillus pleuropneumoniae serotype 7 (strain AP76).